Consider the following 237-residue polypeptide: 6-carboxyhexanoate--CoA ligase (237 aa).

The protein belongs to the BioW family. As to quaternary structure, homodimer. Mg(2+) is required as a cofactor.

It carries out the reaction heptanedioate + ATP + CoA = 6-carboxyhexanoyl-CoA + AMP + diphosphate. The protein operates within metabolic intermediate metabolism; pimeloyl-CoA biosynthesis; pimeloyl-CoA from pimelate: step 1/1. Functionally, catalyzes the transformation of pimelate into pimeloyl-CoA with concomitant hydrolysis of ATP to AMP. The sequence is that of 6-carboxyhexanoate--CoA ligase from Methanocaldococcus jannaschii (strain ATCC 43067 / DSM 2661 / JAL-1 / JCM 10045 / NBRC 100440) (Methanococcus jannaschii).